The sequence spans 485 residues: tRNA-2-methylthio-N(6)-dimethylallyladenosine synthase (485 aa).

Residues 37–154 (GKLYIKTHGC…LPELIRARRE (118 aa)) form the MTTase N-terminal domain. [4Fe-4S] cluster is bound by residues Cys-46, Cys-83, Cys-117, Cys-191, Cys-195, and Cys-198. Positions 177 to 416 (RADGPSAFVS…HINAHAAGIS (240 aa)) constitute a Radical SAM core domain. The region spanning 417–480 (QRMVGSVQRV…SNSLRGRIQL (64 aa)) is the TRAM domain.

It belongs to the methylthiotransferase family. MiaB subfamily. In terms of assembly, monomer. It depends on [4Fe-4S] cluster as a cofactor.

It is found in the cytoplasm. It carries out the reaction N(6)-dimethylallyladenosine(37) in tRNA + (sulfur carrier)-SH + AH2 + 2 S-adenosyl-L-methionine = 2-methylsulfanyl-N(6)-dimethylallyladenosine(37) in tRNA + (sulfur carrier)-H + 5'-deoxyadenosine + L-methionine + A + S-adenosyl-L-homocysteine + 2 H(+). Catalyzes the methylthiolation of N6-(dimethylallyl)adenosine (i(6)A), leading to the formation of 2-methylthio-N6-(dimethylallyl)adenosine (ms(2)i(6)A) at position 37 in tRNAs that read codons beginning with uridine. This is tRNA-2-methylthio-N(6)-dimethylallyladenosine synthase from Xanthomonas campestris pv. campestris (strain 8004).